The chain runs to 154 residues: Cytochrome c-550 (154 aa).

Residues 1-20 (MKISIYATLAALSLALPAVA) form the signal peptide. Gln21 is subject to Pyrrolidone carboxylic acid. The heme c site is built by Cys35, Cys38, His39, and Met120. Residues 150–154 (EGAAN) constitute a propeptide that is removed on maturation.

In terms of processing, binds 1 heme c group covalently per subunit.

The chain is Cytochrome c-550 (cyc) from Paracoccus versutus (Thiobacillus versutus).